An 854-amino-acid chain; its full sequence is DNA gyrase subunit A (854 aa).

In terms of domain architecture, Topo IIA-type catalytic spans 42 to 510; the sequence is LPEVRDGLKP…ADGQVSDEDL (469 aa). The active-site O-(5'-phospho-DNA)-tyrosine intermediate is Y129. The short motif at 537 to 543 is the GyrA-box element; the sequence is QKRGGKG.

Belongs to the type II topoisomerase GyrA/ParC subunit family. As to quaternary structure, heterotetramer, composed of two GyrA and two GyrB chains. In the heterotetramer, GyrA contains the active site tyrosine that forms a transient covalent intermediate with DNA, while GyrB binds cofactors and catalyzes ATP hydrolysis.

The protein localises to the cytoplasm. It catalyses the reaction ATP-dependent breakage, passage and rejoining of double-stranded DNA.. With respect to regulation, DNA supercoiling is inhibited by the coumarin antibiotic novobiocin. Also inhibited by the fluoroquinolones ciprofloxacin and moxifloxacin. A type II topoisomerase that negatively supercoils closed circular double-stranded (ds) DNA in an ATP-dependent manner to modulate DNA topology and maintain chromosomes in an underwound state; also catalyzes the interconversion of other topological isomers of double-stranded DNA rings, including catenanes. At comparable concentrations has a stronger decatenation activity than E.coli, which is inhibited by ciprofloxacin and novobiocin. Cleaves dsDNA at the sequence 5'-AT/GGCC-3', leaving a 4 base overhang. Relaxes negatively supercoiled DNA in an ATP-independent manner. Its function is as follows. Negative supercoiling favors strand separation, and DNA replication, transcription, recombination and repair, all of which involve strand separation. Type II topoisomerases break and join 2 DNA strands simultaneously in an ATP-dependent manner. The protein is DNA gyrase subunit A of Mycolicibacterium smegmatis (Mycobacterium smegmatis).